Consider the following 402-residue polypeptide: Putative cytochrome P450 123 (402 aa).

C350 contacts heme.

Belongs to the cytochrome P450 family. Heme serves as cofactor.

This chain is Putative cytochrome P450 123 (cyp123), found in Mycobacterium bovis (strain ATCC BAA-935 / AF2122/97).